We begin with the raw amino-acid sequence, 283 residues long: Elongation factor Ts (283 aa).

The segment at 79–82 (TDFV) is involved in Mg(2+) ion dislocation from EF-Tu.

It belongs to the EF-Ts family.

The protein resides in the cytoplasm. Its function is as follows. Associates with the EF-Tu.GDP complex and induces the exchange of GDP to GTP. It remains bound to the aminoacyl-tRNA.EF-Tu.GTP complex up to the GTP hydrolysis stage on the ribosome. The polypeptide is Elongation factor Ts (Shewanella amazonensis (strain ATCC BAA-1098 / SB2B)).